Here is a 246-residue protein sequence, read N- to C-terminus: ATP synthase subunit a, chloroplastic (246 aa).

4 helical membrane-spanning segments follow: residues 35–55, 94–114, 133–153, and 202–222; these read GQVFIVSWLVIAALIGFALVG, VPYIATVFLFIFGANWAGALI, INVTVALALLTSLSYFYAGLS, and VFALLVPILIPLPVMTLGLFA.

The protein belongs to the ATPase A chain family. F-type ATPases have 2 components, CF(1) - the catalytic core - and CF(0) - the membrane proton channel. CF(1) has five subunits: alpha(3), beta(3), gamma(1), delta(1), epsilon(1). CF(0) has four main subunits: a, b, b' and c.

The protein resides in the plastid. It is found in the chloroplast thylakoid membrane. In terms of biological role, key component of the proton channel; it plays a direct role in the translocation of protons across the membrane. This Rhodomonas salina (Cryptomonas salina) protein is ATP synthase subunit a, chloroplastic.